Here is a 107-residue protein sequence, read N- to C-terminus: Acidic phospholipase A2 2 (107 aa).

6 cysteine pairs are disulfide-bonded: Cys26–Cys100, Cys28–Cys38, Cys37–Cys82, Cys43–Cys107, Cys44–Cys75, and Cys62–Cys73. 3 residues coordinate Ca(2+): Tyr27, Gly29, and Gly31. The active site involves His41. Asp42 is a binding site for Ca(2+). Residue Asp76 is part of the active site.

It depends on Ca(2+) as a cofactor. Expressed by the venom gland.

Its subcellular location is the secreted. The enzyme catalyses a 1,2-diacyl-sn-glycero-3-phosphocholine + H2O = a 1-acyl-sn-glycero-3-phosphocholine + a fatty acid + H(+). PLA2 catalyzes the calcium-dependent hydrolysis of the 2-acyl groups in 3-sn-phosphoglycerides. The sequence is that of Acidic phospholipase A2 2 from Bothrops insularis (Golden lancehead).